The primary structure comprises 327 residues: Ankyrin repeat domain-containing protein SOWAHD (327 aa).

A disordered region spans residues 1–31 (MAQALEDGNPLPKASNRPAESEAPSDPQIKD). ANK repeat units follow at residues 112 to 141 (CLEP…AEPS), 147 to 162 (DPIT…AKHG), and 186 to 216 (PGSG…LGAD). Residues 251-311 (ERDRKRENAN…EKKASSTQEG (61 aa)) are disordered. Positions 260–275 (NNNSSRTTTTTTTTSR) are enriched in low complexity. Residues 292–305 (HYKEASQPVKEKKA) are compositionally biased toward basic and acidic residues.

Belongs to the SOWAH family.

This is Ankyrin repeat domain-containing protein SOWAHD (Sowahd) from Mus musculus (Mouse).